We begin with the raw amino-acid sequence, 683 residues long: MSSGTMKFNGYLRVRIGEAVGLQPTRWSLRHSLFKKGHQLLDPYLTVSVDQVRVGQTSTKQKTNKPTYNEEFCANVTDGGHLELAVFHETPLGYDHFVANCTLQFQELLRTAGTSDTFEGWVDLEPEGKVFVVITLTGSFTEATLQRDRIFKHFTRKRQRAMRRRVHQVNGHKFMATYLRQPTYCSHCREFIWGVFGKQGYQCQVCTCVVHKRCHHLIVTACTCQNNINKVDAKIAEQRFGINIPHKFNVHNYKVPTFCDHCGSLLWGIMRQGLQCKICKMNVHIRCQANVAPNCGVNAVELAKTLAGMGLQPGNISPTSKLISRSTLRRQGKEGSKEGNGIGVNSSSRFGIDNFEFIRVLGKGSFGKVMLARIKETGELYAVKVLKKDVILQDDDVECTMTEKRILSLARNHPFLTQLFCCFQTPDRLFFVMEFVNGGDLMFHIQKSRRFDEARARFYAAEIISALMFLHEKGIIYRDLKLDNVLLDHEGHCKLADFGMCKEGICNGVTTATFCGTPDYIAPEILQEMLYGPAVDWWAMGVLLYEMLCGHAPFEAENEDDLFEAILNDEVVYPTWLHEDATGILKSFMTKNPTMRLGSLTQGGEHEILRHPFFKEIDWAQLNHRQLEPPFRPRIKSREDVSNFDPDFIKEEPVLTPIDEGHLPMINQDEFRNFSYVSPELQL.

The 118-residue stretch at 1-118 (MSSGTMKFNG…LRTAGTSDTF (118 aa)) folds into the C2 domain. Residues Ser28 and Ser32 each carry the phosphoserine modification. 2 consecutive Phorbol-ester/DAG-type zinc fingers follow at residues 171–222 (GHKF…VTAC) and 245–295 (PHKF…APNC). Ser317 carries the phosphoserine modification. The region spanning 355–614 (FEFIRVLGKG…EHEILRHPFF (260 aa)) is the Protein kinase domain. ATP contacts are provided by residues 361 to 369 (LGKGSFGKV) and Lys384. Residue Asp479 is the Proton acceptor of the active site. Thr513 bears the Phosphothreonine; by PDPK1 mark. The AGC-kinase C-terminal domain occupies 615–683 (KEIDWAQLNH…FSYVSPELQL (69 aa)). Thr656 carries the post-translational modification Phosphothreonine. Ser675 carries the post-translational modification Phosphoserine.

It belongs to the protein kinase superfamily. AGC Ser/Thr protein kinase family. PKC subfamily. Interacts with FYN. Interacts with RALA. Interacts with DGKQ. Predominantly expressed in lung and skin.

Its subcellular location is the cytoplasm. It catalyses the reaction L-seryl-[protein] + ATP = O-phospho-L-seryl-[protein] + ADP + H(+). The enzyme catalyses L-threonyl-[protein] + ATP = O-phospho-L-threonyl-[protein] + ADP + H(+). Novel PKCs (PRKCD, PRKCE, PRKCH and PRKCQ) are calcium-insensitive, but activated by diacylglycerol (DAG) and phosphatidylserine. Three specific sites; Thr-513 (activation loop of the kinase domain), Thr-656 (turn motif) and Ser-675 (hydrophobic region), need to be phosphorylated for its full activation. In terms of biological role, calcium-independent, phospholipid- and diacylglycerol (DAG)-dependent serine/threonine-protein kinase that is involved in the regulation of cell differentiation in keratinocytes and pre-B cell receptor, mediates regulation of epithelial tight junction integrity and foam cell formation, and is required for glioblastoma proliferation and apoptosis prevention in MCF-7 cells. In keratinocytes, binds and activates the tyrosine kinase FYN, which in turn blocks epidermal growth factor receptor (EGFR) signaling and leads to keratinocyte growth arrest and differentiation. Associates with the cyclin CCNE1-CDK2-CDKN1B complex and inhibits CDK2 kinase activity, leading to RB1 dephosphorylation and thereby G1 arrest in keratinocytes. In association with RALA activates actin depolymerization, which is necessary for keratinocyte differentiation. In the pre-B cell receptor signaling, functions downstream of BLNK by up-regulating IRF4, which in turn activates L chain gene rearrangement. Regulates epithelial tight junctions (TJs) by phosphorylating occludin (OCLN) on threonine residues, which is necessary for the assembly and maintenance of TJs. In association with PLD2 and via TLR4 signaling, is involved in lipopolysaccharide (LPS)-induced RGS2 down-regulation and foam cell formation. Upon PMA stimulation, mediates glioblastoma cell proliferation by activating the mTOR pathway, the PI3K/AKT pathway and the ERK1-dependent phosphorylation of ELK1. Involved in the protection of glioblastoma cells from irradiation-induced apoptosis by preventing caspase-9 activation. In camptothecin-treated MCF-7 cells, regulates NF-kappa-B upstream signaling by activating IKBKB, and confers protection against DNA damage-induced apoptosis. Promotes oncogenic functions of ATF2 in the nucleus while blocking its apoptotic function at mitochondria. Phosphorylates ATF2 which promotes its nuclear retention and transcriptional activity and negatively regulates its mitochondrial localization. The chain is Protein kinase C eta type (Prkch) from Mus musculus (Mouse).